Here is a 336-residue protein sequence, read N- to C-terminus: UDP-3-O-acylglucosamine N-acyltransferase (336 aa).

The active-site Proton acceptor is the His237.

The protein belongs to the transferase hexapeptide repeat family. LpxD subfamily. As to quaternary structure, homotrimer.

It carries out the reaction a UDP-3-O-[(3R)-3-hydroxyacyl]-alpha-D-glucosamine + a (3R)-hydroxyacyl-[ACP] = a UDP-2-N,3-O-bis[(3R)-3-hydroxyacyl]-alpha-D-glucosamine + holo-[ACP] + H(+). It participates in bacterial outer membrane biogenesis; LPS lipid A biosynthesis. Functionally, catalyzes the N-acylation of UDP-3-O-acylglucosamine using 3-hydroxyacyl-ACP as the acyl donor. Is involved in the biosynthesis of lipid A, a phosphorylated glycolipid that anchors the lipopolysaccharide to the outer membrane of the cell. In Alcanivorax borkumensis (strain ATCC 700651 / DSM 11573 / NCIMB 13689 / SK2), this protein is UDP-3-O-acylglucosamine N-acyltransferase.